The chain runs to 120 residues: MLATSNRFERRKRRVRLKLKNNLSLLRLSIFKSNRHFYVQLIDDSCGKTYAAASTLEREVIALAHRRVNSNSVKIVAKLMSERLNKLDNCKKFVFDRGPYKYIGVVAEFANELRSYGFEF.

The protein belongs to the universal ribosomal protein uL18 family. In terms of assembly, part of the 50S ribosomal subunit; part of the 5S rRNA/L5/L18/L25 subcomplex. Contacts the 5S and 23S rRNAs.

Functionally, this is one of the proteins that bind and probably mediate the attachment of the 5S RNA into the large ribosomal subunit, where it forms part of the central protuberance. This chain is Large ribosomal subunit protein uL18, found in Ehrlichia ruminantium (strain Gardel).